The sequence spans 130 residues: Large ribosomal subunit protein bL19 (130 aa).

Belongs to the bacterial ribosomal protein bL19 family.

This protein is located at the 30S-50S ribosomal subunit interface and may play a role in the structure and function of the aminoacyl-tRNA binding site. The protein is Large ribosomal subunit protein bL19 of Burkholderia vietnamiensis (strain G4 / LMG 22486) (Burkholderia cepacia (strain R1808)).